The chain runs to 262 residues: Acyl-[acyl-carrier-protein]--UDP-N-acetylglucosamine O-acyltransferase (262 aa).

This sequence belongs to the transferase hexapeptide repeat family. LpxA subfamily. As to quaternary structure, homotrimer.

The protein localises to the cytoplasm. It carries out the reaction a (3R)-hydroxyacyl-[ACP] + UDP-N-acetyl-alpha-D-glucosamine = a UDP-3-O-[(3R)-3-hydroxyacyl]-N-acetyl-alpha-D-glucosamine + holo-[ACP]. The protein operates within glycolipid biosynthesis; lipid IV(A) biosynthesis; lipid IV(A) from (3R)-3-hydroxytetradecanoyl-[acyl-carrier-protein] and UDP-N-acetyl-alpha-D-glucosamine: step 1/6. Its function is as follows. Involved in the biosynthesis of lipid A, a phosphorylated glycolipid that anchors the lipopolysaccharide to the outer membrane of the cell. The sequence is that of Acyl-[acyl-carrier-protein]--UDP-N-acetylglucosamine O-acyltransferase from Sodalis glossinidius (strain morsitans).